The sequence spans 182 residues: Peptidoglycan-recognition protein SB2 (182 aa).

The signal sequence occupies residues 1–17; that stretch reads MKLQLALVLCGLTLALG. Residues 40-165 form the N-acetylmuramoyl-L-alanine amidase domain; that stretch reads PVRLIIIHHT…CQTKATACPG (126 aa). Position 47 (histidine 47) interacts with Zn(2+). Cysteines 54 and 60 form a disulfide. A glycan (N-linked (GlcNAc...) asparagine) is linked at asparagine 149. Histidine 155 and cysteine 163 together coordinate Zn(2+).

Belongs to the N-acetylmuramoyl-L-alanine amidase 2 family. It depends on Zn(2+) as a cofactor.

Its subcellular location is the secreted. The enzyme catalyses Hydrolyzes the link between N-acetylmuramoyl residues and L-amino acid residues in certain cell-wall glycopeptides.. Functionally, N-acetylmuramyl-L-alanine amidase involved in innate immunity by degrading bacterial peptidoglycans (PGN). Probably plays a scavenger role by digesting biologically active PGN into biologically inactive fragments. Has no direct bacteriolytic activity. The sequence is that of Peptidoglycan-recognition protein SB2 (PGRP-SB2) from Drosophila simulans (Fruit fly).